The chain runs to 201 residues: UPF0301 protein BP0319 (201 aa).

The protein belongs to the UPF0301 (AlgH) family.

In Bordetella pertussis (strain Tohama I / ATCC BAA-589 / NCTC 13251), this protein is UPF0301 protein BP0319.